The sequence spans 318 residues: Very-long-chain 3-oxoacyl-CoA reductase-B (318 aa).

The chain crosses the membrane as a helical span at residues 15–35 (FWYLGVVAATWWGLRAAWCLL). 54 to 83 (GKWAVVTGATDGIGKAYAEELARRGMNIVL) provides a ligand contact to NADP(+). A run of 2 helical transmembrane segments spans residues 187 to 207 (GVVLNISSASGMYPVPLLTVY) and 281 to 301 (AITGWISTSLVPVSAAISMGM). Ser194 contacts substrate. The Proton acceptor role is filled by Tyr207.

This sequence belongs to the short-chain dehydrogenases/reductases (SDR) family. 17-beta-HSD 3 subfamily.

Its subcellular location is the endoplasmic reticulum membrane. The catalysed reaction is a very-long-chain (3R)-3-hydroxyacyl-CoA + NADP(+) = a very-long-chain 3-oxoacyl-CoA + NADPH + H(+). It catalyses the reaction 17beta-estradiol + NAD(+) = estrone + NADH + H(+). The enzyme catalyses 17beta-estradiol + NADP(+) = estrone + NADPH + H(+). It functions in the pathway lipid metabolism; fatty acid biosynthesis. Its pathway is steroid biosynthesis; estrogen biosynthesis. Catalyzes the second of the four reactions of the long-chain fatty acids elongation cycle. This endoplasmic reticulum-bound enzymatic process, allows the addition of two carbons to the chain of long- and very long-chain fatty acids/VLCFAs per cycle. This enzyme has a 3-ketoacyl-CoA reductase activity, reducing 3-ketoacyl-CoA to 3-hydroxyacyl-CoA, within each cycle of fatty acid elongation. Thereby, it may participate in the production of VLCFAs of different chain lengths that are involved in multiple biological processes as precursors of membrane lipids and lipid mediators. May also catalyze the transformation of estrone (E1) into estradiol (E2) and play a role in estrogen formation. The protein is Very-long-chain 3-oxoacyl-CoA reductase-B (hsd17b12-b) of Xenopus laevis (African clawed frog).